The chain runs to 822 residues: Nucleolar complex protein 3 (822 aa).

Disordered regions lie at residues methionine 1–aspartate 86, alanine 106–aspartate 142, and lysine 172–aspartate 199. Residues arginine 13–proline 23 show a composition bias toward basic residues. Residues lysine 35–glutamine 45 show a composition bias toward basic and acidic residues. Positions serine 41–asparagine 48 match the Nuclear localization signal motif. A compositionally biased stretch (acidic residues) spans proline 76–aspartate 86. Residues threonine 116–serine 126 show a composition bias toward polar residues. Acidic residues predominate over residues glutamate 181–aspartate 199. Serine 187 bears the Phosphoserine mark. Threonine 193 carries the phosphothreonine modification. Serine 198 carries the post-translational modification Phosphoserine. Residues lysine 445–threonine 509 are a coiled coil.

It belongs to the CBF/MAK21 family.

Its subcellular location is the nucleus. The protein localises to the nucleolus. This Drosophila melanogaster (Fruit fly) protein is Nucleolar complex protein 3.